We begin with the raw amino-acid sequence, 133 residues long: Profilin-2 (133 aa).

The protein belongs to the profilin family. As to quaternary structure, occurs in many kinds of cells as a complex with monomeric actin in a 1:1 ratio.

It localises to the cytoplasm. The protein resides in the cytoskeleton. Functionally, binds to actin and affects the structure of the cytoskeleton. At high concentrations, profilin prevents the polymerization of actin, whereas it enhances it at low concentrations. By binding to PIP2, it inhibits the formation of IP3 and DG. This Artemisia vulgaris (Mugwort) protein is Profilin-2.